Here is a 353-residue protein sequence, read N- to C-terminus: DNA integrity scanning protein DisA (353 aa).

The 139-residue stretch at 6 to 144 (DKELMNILKI…GGIKYVLRDS (139 aa)) folds into the DAC domain. ATP-binding positions include glycine 73, leucine 91, and 104-108 (TRHRT).

The protein belongs to the DisA family. Homooctamer. Mg(2+) serves as cofactor.

It catalyses the reaction 2 ATP = 3',3'-c-di-AMP + 2 diphosphate. Participates in a DNA-damage check-point that is active prior to asymmetric division when DNA is damaged. DisA forms globular foci that rapidly scan along the chromosomes during sporulation, searching for lesions. When a lesion is present, DisA pauses at the lesion site. This triggers a cellular response that culminates in a temporary block in sporulation initiation. In terms of biological role, also has diadenylate cyclase activity, catalyzing the condensation of 2 ATP molecules into cyclic di-AMP (c-di-AMP). c-di-AMP acts as a signaling molecule that couples DNA integrity with progression of sporulation. The rise in c-di-AMP level generated by DisA while scanning the chromosome, operates as a positive signal that advances sporulation; upon encountering a lesion, the DisA focus arrests at the damaged site and halts c-di-AMP synthesis. The polypeptide is DNA integrity scanning protein DisA (Clostridium botulinum (strain Kyoto / Type A2)).